The chain runs to 156 residues: Small ribosomal subunit protein uS7c (156 aa).

The protein belongs to the universal ribosomal protein uS7 family. As to quaternary structure, part of the 30S ribosomal subunit.

It localises to the plastid. The protein resides in the chloroplast. Its function is as follows. One of the primary rRNA binding proteins, it binds directly to 16S rRNA where it nucleates assembly of the head domain of the 30S subunit. The chain is Small ribosomal subunit protein uS7c (rps7) from Cyanidium caldarium (Red alga).